Here is a 702-residue protein sequence, read N- to C-terminus: Neurochondrin (702 aa).

Belongs to the neurochondrin family.

It localises to the cytoplasm. It is found in the cytosol. Its subcellular location is the cell projection. The protein resides in the dendrite. The protein localises to the postsynapse. Probably involved in signal transduction, in the nervous system. Required for the spatial learning process. May also be involved in neurite outgrowth. The polypeptide is Neurochondrin (NCDN) (Gallus gallus (Chicken)).